We begin with the raw amino-acid sequence, 705 residues long: Polyribonucleotide nucleotidyltransferase (705 aa).

Mg(2+)-binding residues include Asp485 and Asp491. Residues 552 to 611 (PRVYTMTIAPEKIRDVIGAGGKTINKIIGETGVQIDIKEDGKIYVMSSDSVGANRALKMI) enclose the KH domain. The 69-residue stretch at 621 to 689 (GEIYLGKVTR…DQGRINLSRR (69 aa)) folds into the S1 motif domain.

The protein belongs to the polyribonucleotide nucleotidyltransferase family. Requires Mg(2+) as cofactor.

The protein localises to the cytoplasm. It carries out the reaction RNA(n+1) + phosphate = RNA(n) + a ribonucleoside 5'-diphosphate. Its function is as follows. Involved in mRNA degradation. Catalyzes the phosphorolysis of single-stranded polyribonucleotides processively in the 3'- to 5'-direction. The polypeptide is Polyribonucleotide nucleotidyltransferase (Clostridium tetani (strain Massachusetts / E88)).